Here is a 420-residue protein sequence, read N- to C-terminus: MAIRKGSSYAVAALLALASVAAVAGEVFFQEKFEDGWESRWVKSEWKKDENMAGEWNHTSGKWNGDAEDKGIQTSEDYRFYAISAEYPEFSNKDKTLVLQFSVKHEQKLDCGGGYVKLLGGDVDQKTLGGDTSYSIISRPDISRYSTKKVHTILTKDGKNHLIKKDVPCQTDQLTHVYTFIIRPDATYSILIDNEEKHTGSIYEHWDILPPKKIKDPEAKKPEDWDDKEYIPDPEDKKPEGYDDIPKEIPDPDAKKPEDWDDEEDGEWTAPTIPNPEYKGPWKQKKIKNPNYQGKWKAPMIDNPDFKDDPYIYAFDSLKYIGIELWQVKSGTLFDNIIITDDPALAKTFAEETWGKHKEAEKAAFDEAEKKKEEEDAAKGGDDEDDDLEDEEDDEKADEDKADSDAEDGKDSDDEKHDEL.

An N-terminal signal peptide occupies residues 1 to 25; that stretch reads MAIRKGSSYAVAALLALASVAAVAG. N-linked (GlcNAc...) asparagine glycosylation occurs at Asn-57. Residues Tyr-115, Lys-117, Tyr-134, and Asp-141 each contribute to the an alpha-D-glucoside site. 7 tandem repeats follow at residues 197–208, 216–227, 233–244, 251–262, 266–276, 280–290, and 294–304. A 4 X approximate repeats region spans residues 197 to 262; the sequence is KHTGSIYEHW…DAKKPEDWDD (66 aa). The span at 213 to 258 shows a compositional bias: basic and acidic residues; that stretch reads KIKDPEAKKPEDWDDKEYIPDPEDKKPEGYDDIPKEIPDPDAKKPE. A disordered region spans residues 213–285; that stretch reads KIKDPEAKKP…PEYKGPWKQK (73 aa). A 3 X approximate repeats region spans residues 266–304; it reads GEWTAPTIPNPEYKGPWKQKKIKNPNYQGKWKAPMIDNP. Glu-324 lines the an alpha-D-glucoside pocket. A compositionally biased stretch (basic and acidic residues) spans 355–381; the sequence is GKHKEAEKAAFDEAEKKKEEEDAAKGG. Positions 355-420 are disordered; sequence GKHKEAEKAA…DSDDEKHDEL (66 aa). The segment covering 382-402 has biased composition (acidic residues); it reads DDEDDDLEDEEDDEKADEDKA. Residues 403 to 420 are compositionally biased toward basic and acidic residues; sequence DSDAEDGKDSDDEKHDEL. Positions 417-420 match the Prevents secretion from ER motif; it reads HDEL.

This sequence belongs to the calreticulin family.

It localises to the endoplasmic reticulum lumen. Molecular calcium-binding chaperone promoting folding, oligomeric assembly and quality control in the ER via the calreticulin/calnexin cycle. This lectin may interact transiently with almost all of the monoglucosylated glycoproteins that are synthesized in the ER. This is Calreticulin (CRT) from Zea mays (Maize).